Consider the following 296-residue polypeptide: Urease accessory protein UreD (296 aa).

It belongs to the UreD family. In terms of assembly, ureD, UreF and UreG form a complex that acts as a GTP-hydrolysis-dependent molecular chaperone, activating the urease apoprotein by helping to assemble the nickel containing metallocenter of UreC. The UreE protein probably delivers the nickel.

Its subcellular location is the cytoplasm. Its function is as follows. Required for maturation of urease via the functional incorporation of the urease nickel metallocenter. This chain is Urease accessory protein UreD, found in Nitrosococcus oceani (strain ATCC 19707 / BCRC 17464 / JCM 30415 / NCIMB 11848 / C-107).